A 651-amino-acid chain; its full sequence is Acetyl-coenzyme A synthetase (651 aa).

CoA is bound by residues 191 to 194 (RGGK), Thr-311, and Asn-335. ATP-binding positions include 387 to 389 (GEP), 411 to 416 (DTWWQT), Asp-500, and Arg-515. Residue Ser-523 coordinates CoA. Arg-526 contributes to the ATP binding site. 3 residues coordinate Mg(2+): Val-537, His-539, and Val-542. Arg-584 is a CoA binding site. At Lys-609 the chain carries N6-acetyllysine.

It belongs to the ATP-dependent AMP-binding enzyme family. Mg(2+) is required as a cofactor. In terms of processing, acetylated. Deacetylation by the SIR2-homolog deacetylase activates the enzyme.

It carries out the reaction acetate + ATP + CoA = acetyl-CoA + AMP + diphosphate. In terms of biological role, catalyzes the conversion of acetate into acetyl-CoA (AcCoA), an essential intermediate at the junction of anabolic and catabolic pathways. AcsA undergoes a two-step reaction. In the first half reaction, AcsA combines acetate with ATP to form acetyl-adenylate (AcAMP) intermediate. In the second half reaction, it can then transfer the acetyl group from AcAMP to the sulfhydryl group of CoA, forming the product AcCoA. In Pseudomonas syringae pv. tomato (strain ATCC BAA-871 / DC3000), this protein is Acetyl-coenzyme A synthetase.